The chain runs to 217 residues: Thiamine-phosphate synthase (217 aa).

4-amino-2-methyl-5-(diphosphooxymethyl)pyrimidine contacts are provided by residues 44–48 and Asn76; that span reads QYREK. Positions 77 and 96 each coordinate Mg(2+). Ser115 lines the 4-amino-2-methyl-5-(diphosphooxymethyl)pyrimidine pocket. 141-143 is a binding site for 2-[(2R,5Z)-2-carboxy-4-methylthiazol-5(2H)-ylidene]ethyl phosphate; it reads TKT. Lys144 serves as a coordination point for 4-amino-2-methyl-5-(diphosphooxymethyl)pyrimidine. 2-[(2R,5Z)-2-carboxy-4-methylthiazol-5(2H)-ylidene]ethyl phosphate is bound by residues Gly172 and 192-193; that span reads VS.

Belongs to the thiamine-phosphate synthase family. Mg(2+) serves as cofactor.

It carries out the reaction 2-[(2R,5Z)-2-carboxy-4-methylthiazol-5(2H)-ylidene]ethyl phosphate + 4-amino-2-methyl-5-(diphosphooxymethyl)pyrimidine + 2 H(+) = thiamine phosphate + CO2 + diphosphate. It catalyses the reaction 2-(2-carboxy-4-methylthiazol-5-yl)ethyl phosphate + 4-amino-2-methyl-5-(diphosphooxymethyl)pyrimidine + 2 H(+) = thiamine phosphate + CO2 + diphosphate. The enzyme catalyses 4-methyl-5-(2-phosphooxyethyl)-thiazole + 4-amino-2-methyl-5-(diphosphooxymethyl)pyrimidine + H(+) = thiamine phosphate + diphosphate. Its pathway is cofactor biosynthesis; thiamine diphosphate biosynthesis; thiamine phosphate from 4-amino-2-methyl-5-diphosphomethylpyrimidine and 4-methyl-5-(2-phosphoethyl)-thiazole: step 1/1. Its function is as follows. Condenses 4-methyl-5-(beta-hydroxyethyl)thiazole monophosphate (THZ-P) and 2-methyl-4-amino-5-hydroxymethyl pyrimidine pyrophosphate (HMP-PP) to form thiamine monophosphate (TMP). In Lawsonia intracellularis (strain PHE/MN1-00), this protein is Thiamine-phosphate synthase.